Here is a 349-residue protein sequence, read N- to C-terminus: Alanine racemase (349 aa).

K35 serves as the catalytic Proton acceptor; specific for D-alanine. K35 carries the post-translational modification N6-(pyridoxal phosphate)lysine. R130 lines the substrate pocket. The active-site Proton acceptor; specific for L-alanine is the Y244. Substrate is bound at residue M292.

This sequence belongs to the alanine racemase family. The cofactor is pyridoxal 5'-phosphate.

It carries out the reaction L-alanine = D-alanine. It participates in amino-acid biosynthesis; D-alanine biosynthesis; D-alanine from L-alanine: step 1/1. Its function is as follows. Catalyzes the interconversion of L-alanine and D-alanine. May also act on other amino acids. This chain is Alanine racemase (alr), found in Cereibacter sphaeroides (strain ATCC 17023 / DSM 158 / JCM 6121 / CCUG 31486 / LMG 2827 / NBRC 12203 / NCIMB 8253 / ATH 2.4.1.) (Rhodobacter sphaeroides).